A 417-amino-acid polypeptide reads, in one-letter code: Blood group Rh(CE) polypeptide (417 aa).

The next 11 membrane-spanning stretches (helical) occupy residues 12–32, 44–64, 77–97, 125–145, 172–192, 203–223, 238–258, 265–285, 287–307, 331–351, and 358–378; these read CLPLCALTLEAALILLFYFFT, LVASYQVGQDLTVMAALGLGF, VAFNLFMLALGVQWAILLDGF, ISAGAVLGKVNLAQLVVMVLV, FYVFAAYFGLTVAWCLPKPLP, TIPSLSAMLGALFLWMFWPSV, MFNTYYALAVSVVTAISGSSL, ISMTYVHSAVLAGGVAVGTSC, LIPSPWLAMVLGLVAGLISIG, IFSLLGLLGEITYIVLLVLHT, and MIGFQVLLSIGELSLAIVIAL.

The protein belongs to the ammonium transporter (TC 2.A.49) family. Rh subfamily. As to quaternary structure, heterotrimer; a RHCE monomer interacts with a RHAG homodimer. Component of the ankyrin-1 complex in the erythrocyte, composed of ANK1, RHCE, RHAG, SLC4A1, EPB42, GYPA, GYPB and AQP1. Interacts (via the N- and C-terminal) with ANK1 (via ANk 1-5 repeats); mediates the primary membrane attachment site for ANK1. In terms of tissue distribution, restricted to tissues or cell lines expressing erythroid characters. Isoform 4g and isoform RhPI-Alpha are expressed in immature erythroblasts but not in mature erythroblasts.

The protein localises to the membrane. In terms of biological role, component of the ankyrin-1 complex, a multiprotein complex involved in the stability and shape of the erythrocyte membrane. Mediates the primary membrane attachment site for ANK1 when associated with RHAG. May participate in the ammonium and carbon dioxide transport through the heterotrimer form. The sequence is that of Blood group Rh(CE) polypeptide from Homo sapiens (Human).